The following is a 337-amino-acid chain: D-lactate dehydrogenase (337 aa).

NAD(+) is bound by residues 156-157, Asp-176, 207-208, Asn-213, 234-236, and Asp-260; these read HI, VP, and CSR. Residue Arg-236 is part of the active site. Glu-265 is an active-site residue. Residue His-297 is the Proton donor of the active site.

It belongs to the D-isomer specific 2-hydroxyacid dehydrogenase family. Homodimer.

The catalysed reaction is (R)-lactate + NAD(+) = pyruvate + NADH + H(+). In Lactobacillus helveticus (Lactobacillus suntoryeus), this protein is D-lactate dehydrogenase.